The sequence spans 434 residues: MSHDQRSPSEEVSRTALSKPASESTIVGDGHHPLPAKDTSTRAWLVVVGGLLIYFPTFGFLNAFGTFQTFYVQDLLAGTSSSKIAWIGSLQIFLLFIGGLVVGPLYDKVGATKLLVPGSVVYVVALMLTSVCKKYYQLILAQGILFGCANALLFYPTIAAINQWFDRRRGIALGLAVSGSSLGGIFWTEIIQLMLDHIGFGWTVRACGFISLAFLVPSCVLIITRPPEPGESKDMQLDFKAIFTDTKYLLFSVGMLLVLWGMFIPFFYLPSYGETYGMSVTGANNLLAYMNAGSFVGRVLTGLMADRLGRFNVISLAALSCGILLFCLHKITTSGAIIAFSTLYGICSGGLISLQSACIGQITPDHSIIGVKIGLMMGFCSVGGLTGSPIAGALLSADHQKWYGFIDFCGSILMGGAVVTILSRYVAAPREWKF.

Over residues 1-13 (MSHDQRSPSEEVS) the composition is skewed to basic and acidic residues. A disordered region spans residues 1–34 (MSHDQRSPSEEVSRTALSKPASESTIVGDGHHPL). A run of 12 helical transmembrane segments spans residues 44–64 (WLVV…LNAF), 84–104 (IAWI…VVGP), 109–129 (VGAT…LMLT), 138–158 (LILA…YPTI), 171–191 (IALG…TEII), 203–223 (TVRA…VLII), 249–269 (LLFS…FFYL), 280–302 (VTGA…VLTG), 311–331 (FNVI…LHKI), 334–354 (SGAI…LISL), 375–395 (LMMG…GALL), and 402–422 (WYGF…VTIL).

The protein belongs to the major facilitator superfamily. Monocarboxylate porter (TC 2.A.1.13) family.

The protein resides in the cell membrane. Its function is as follows. MFS-type transporter; part of the gene cluster that mediates the biosynthesis of pyranonigrins, a family of antioxidative compounds. May be involved in the secretion of pyranonigrins. This chain is MFS-type transporter pynF, found in Aspergillus niger (strain ATCC MYA-4892 / CBS 513.88 / FGSC A1513).